The sequence spans 363 residues: Peptide chain release factor 2 (363 aa).

Glutamine 251 is modified (N5-methylglutamine).

Belongs to the prokaryotic/mitochondrial release factor family. In terms of processing, methylated by PrmC. Methylation increases the termination efficiency of RF2.

The protein resides in the cytoplasm. Peptide chain release factor 2 directs the termination of translation in response to the peptide chain termination codons UGA and UAA. The protein is Peptide chain release factor 2 of Helicobacter pylori (strain P12).